The primary structure comprises 395 residues: ATP phosphoribosyltransferase regulatory subunit (395 aa).

It belongs to the class-II aminoacyl-tRNA synthetase family. HisZ subfamily. As to quaternary structure, heteromultimer composed of HisG and HisZ subunits.

The protein localises to the cytoplasm. It functions in the pathway amino-acid biosynthesis; L-histidine biosynthesis; L-histidine from 5-phospho-alpha-D-ribose 1-diphosphate: step 1/9. In terms of biological role, required for the first step of histidine biosynthesis. May allow the feedback regulation of ATP phosphoribosyltransferase activity by histidine. The chain is ATP phosphoribosyltransferase regulatory subunit from Pseudomonas fluorescens (strain ATCC BAA-477 / NRRL B-23932 / Pf-5).